Here is a 337-residue protein sequence, read N- to C-terminus: Cytoskeleton protein RodZ (337 aa).

The Cytoplasmic segment spans residues 1–111; sequence MNTEATHDQN…LGKRRKKRDG (111 aa). In terms of domain architecture, HTH cro/C1-type spans 19-71; that stretch reads LRNAREQLGLSQQAVAERLCLKVSTVRDIEEDKAPADLASTFLRGYIRSYARL. Residues 30 to 49 constitute a DNA-binding region (H-T-H motif); it reads QQAVAERLCLKVSTVRDIEE. A helical; Signal-anchor for type II membrane protein membrane pass occupies residues 112 to 132; sequence WLMTFTWLVLFVVIGLSGAWW. At 133 to 337 the chain is on the periplasmic side; the sequence is WQDHKAQQEE…TLNAEQSPAQ (205 aa). Polar residues predominate over residues 145–167; that stretch reads TMADQSSAELSSNSEQGQSVPLN. The interval 145–236 is disordered; sequence TMADQSSAEL…TAATTPDGAA (92 aa). Residues 168-207 are compositionally biased toward low complexity; sequence TSTTTDPATTSTPPASVDTTATNTQTPAVTAPAPAVDPQQ. A compositionally biased stretch (polar residues) spans 208–218; sequence NAVVSPSQANV. The span at 219–236 shows a compositional bias: low complexity; that stretch reads DTAATPAPTAATTPDGAA.

Belongs to the RodZ family.

Its subcellular location is the cell inner membrane. In terms of biological role, cytoskeletal protein that is involved in cell-shape control through regulation of the length of the long axis. The chain is Cytoskeleton protein RodZ from Escherichia coli O9:H4 (strain HS).